Here is a 94-residue protein sequence, read N- to C-terminus: Cell division protein CrgA (94 aa).

2 helical membrane passes run Val-31–Phe-51 and Leu-71–Met-91.

Belongs to the CrgA family.

The protein localises to the cell membrane. Its function is as follows. Involved in cell division. This is Cell division protein CrgA from Mycobacterium sp. (strain JLS).